Consider the following 82-residue polypeptide: Chaperone protein DnaJ 1 (82 aa).

The disordered stretch occupies residues Tyr1 to Asp33.

Belongs to the DnaJ family. In terms of assembly, homodimer. The cofactor is Zn(2+).

The protein resides in the cytoplasm. Its function is as follows. Participates actively in the response to hyperosmotic and heat shock by preventing the aggregation of stress-denatured proteins and by disaggregating proteins, also in an autonomous, DnaK-independent fashion. Unfolded proteins bind initially to DnaJ; upon interaction with the DnaJ-bound protein, DnaK hydrolyzes its bound ATP, resulting in the formation of a stable complex. GrpE releases ADP from DnaK; ATP binding to DnaK triggers the release of the substrate protein, thus completing the reaction cycle. Several rounds of ATP-dependent interactions between DnaJ, DnaK and GrpE are required for fully efficient folding. Also involved, together with DnaK and GrpE, in the DNA replication of plasmids through activation of initiation proteins. This Streptomyces albus G protein is Chaperone protein DnaJ 1 (dnaJ1).